We begin with the raw amino-acid sequence, 348 residues long: Rhodopsin (348 aa).

Met1 is modified (N-acetylmethionine). Residues 1 to 36 are Extracellular-facing; it reads MNGTEGPNFYVPFSNATGVVRSPFEYPQYYLAEPWQ. Asn2 and Asn15 each carry an N-linked (GlcNAc...) asparagine glycan. Residues 37 to 61 traverse the membrane as a helical segment; sequence FSMLAAYMFMLIVLGFPINFLTLYV. At 62–73 the chain is on the cytoplasmic side; that stretch reads TVQHKKLRTPLN. A helical membrane pass occupies residues 74 to 96; the sequence is YILLNLAVADLFMVFGGFTTTLY. The Extracellular portion of the chain corresponds to 97 to 110; that stretch reads TSLHGYFVFGPTGC. The cysteines at positions 110 and 187 are disulfide-linked. A helical membrane pass occupies residues 111 to 133; that stretch reads NLEGFFATLGGEIALWSLVVLAI. The short motif at 134 to 136 is the 'Ionic lock' involved in activated form stabilization element; sequence ERY. The Cytoplasmic portion of the chain corresponds to 134-152; the sequence is ERYVVVCKPMSNFRFGENH. Residues 153–173 traverse the membrane as a helical segment; that stretch reads AIMGLVFTWIMALACAAPPLV. Over 174–202 the chain is Extracellular; sequence GWSRYIPEGMQCSCGIDYYTLKPEVNNES. A Zn(2+)-binding site is contributed by Glu201. Residues 203-224 traverse the membrane as a helical segment; it reads FVIYMFVVHFFIPLFVIFFCYG. Topologically, residues 225-252 are cytoplasmic; that stretch reads QLVFTVKEAAAQQQESATTQKAEKEVTR. Residues 253-274 form a helical membrane-spanning segment; sequence MVIIMVIAFLICWLPYAGVAFY. At 275–286 the chain is on the extracellular side; it reads IFTHQGSNFGPI. Gln279 contacts Zn(2+). A helical membrane pass occupies residues 287–308; sequence FMTLPAFFAKTASIYNPVIYIM. Lys296 bears the N6-(retinylidene)lysine mark. Residues 309 to 348 lie on the Cytoplasmic side of the membrane; sequence MNKQFRTCMITTLCCGKNPLGDDEASTTASKTETSQVAPA. 2 S-palmitoyl cysteine lipidation sites follow: Cys322 and Cys323. The interaction with SAG stretch occupies residues 330-348; it reads DDEASTTASKTETSQVAPA. Ser334 carries the phosphoserine modification. Phosphothreonine is present on residues Thr335 and Thr336. Ser338 bears the Phosphoserine mark. A phosphothreonine mark is found at Thr340 and Thr342. A Phosphoserine modification is found at Ser343.

It belongs to the G-protein coupled receptor 1 family. Opsin subfamily. In terms of assembly, homodimer. May form a complex composed of RHO, GRK1 and RCVRN in a Ca(2+)-dependent manner; RCVRN prevents the interaction between GRK1 and RHO. Interacts with GRK1. Interacts (phosphorylated form) with SAG. Interacts with GNAT1. Interacts with GNAT3. SAG and G-proteins compete for a common binding site. Interacts with PRCD; the interaction promotes PRCD stability. Forms a complex with ASAP1 and ARF4. Forms a complex with ASAP1, RAB11A, Rabin8/RAB3IP, ARF4 and RAB11FIP3; the complex regulates Golgi-to-cilia rhodopsin/RHO transport in photoreceptors. Phosphorylated on some or all of the serine and threonine residues present in the C-terminal region. Post-translationally, contains one covalently linked retinal chromophore. Upon light absorption, the covalently bound 11-cis-retinal is converted to all-trans-retinal. After hydrolysis of the Schiff base and release of the covalently bound all-trans-retinal, active rhodopsin is regenerated by binding of a fresh molecule of 11-cis-retinal.

The protein localises to the membrane. It localises to the cell projection. The protein resides in the cilium. Its subcellular location is the photoreceptor outer segment. Functionally, photoreceptor required for image-forming vision at low light intensity. Required for photoreceptor cell viability after birth. Light-induced isomerization of 11-cis to all-trans retinal triggers a conformational change that activates signaling via G-proteins. Subsequent receptor phosphorylation mediates displacement of the bound G-protein alpha subunit by the arrestin SAG and terminates signaling. This is Rhodopsin (RHO) from Otolemur crassicaudatus (Brown greater galago).